The sequence spans 299 residues: Large ribosomal subunit protein uL18 (299 aa).

This sequence belongs to the universal ribosomal protein uL18 family. Component of the large ribosomal subunit (LSU). Interacts with Fmr1 to form the RNA-induced silencing complex (RISC), a ribonucleoprotein (RNP) complex involved in translation regulation, other components of the complex are Rm62, RpL11, AGO2 and Dcr-1.

The protein localises to the cytoplasm. It is found in the nucleus. Component of the ribosome, a large ribonucleoprotein complex responsible for the synthesis of proteins in the cell. The small ribosomal subunit (SSU) binds messenger RNAs (mRNAs) and translates the encoded message by selecting cognate aminoacyl-transfer RNA (tRNA) molecules. The large subunit (LSU) contains the ribosomal catalytic site termed the peptidyl transferase center (PTC), which catalyzes the formation of peptide bonds, thereby polymerizing the amino acids delivered by tRNAs into a polypeptide chain. The nascent polypeptides leave the ribosome through a tunnel in the LSU and interact with protein factors that function in enzymatic processing, targeting, and the membrane insertion of nascent chains at the exit of the ribosomal tunnel. This chain is Large ribosomal subunit protein uL18 (RpL5), found in Drosophila melanogaster (Fruit fly).